The sequence spans 306 residues: Agmatinase (306 aa).

6 residues coordinate Mn(2+): histidine 126, aspartate 149, histidine 151, aspartate 153, aspartate 230, and aspartate 232.

It belongs to the arginase family. Agmatinase subfamily. Mn(2+) serves as cofactor.

The catalysed reaction is agmatine + H2O = urea + putrescine. It functions in the pathway amine and polyamine biosynthesis; putrescine biosynthesis via agmatine pathway; putrescine from agmatine: step 1/1. Functionally, catalyzes the formation of putrescine from agmatine. The protein is Agmatinase of Escherichia coli O9:H4 (strain HS).